Reading from the N-terminus, the 230-residue chain is Sodium channel modifier 1 (230 aa).

A Phosphoserine modification is found at Ser2. The short motif at 4-20 (KREGDDWSQLNVLKKRR) is the Bipartite nuclear localization signal element. The Matrin-type zinc-finger motif lies at 42–74 (FACAICPHRPVLDTLAMLTAHRAGKKHLSSLQL). Residue Lys67 forms a Glycyl lysine isopeptide (Lys-Gly) (interchain with G-Cter in SUMO2) linkage. 3 disordered regions span residues 76–106 (YGKKQPGKERKQNPKHQNELRREETKAEAPL), 129–186 (RRKY…SPTR), and 200–230 (GWIPDGRGRWVKDENVEFDSDEEEPPDLPLD). The segment covering 81 to 102 (PGKERKQNPKHQNELRREETKA) has biased composition (basic and acidic residues). Ser144 is subject to Phosphoserine. Over residues 164–174 (PAAGPQAEESA) the composition is skewed to low complexity. At Ser183 the chain carries Phosphoserine. A required for interaction with LUC7L2 region spans residues 188 to 230 (RALDHYLTLRSSGWIPDGRGRWVKDENVEFDSDEEEPPDLPLD). Positions 205–214 (GRGRWVKDEN) are enriched in basic and acidic residues. Acidic residues predominate over residues 215–230 (VEFDSDEEEPPDLPLD). A Phosphoserine modification is found at Ser219.

In terms of assembly, component of the minor spliceosome, which splices U12-type introns. Within this complex, interacts with RNF113A, as well as with SF3B1/SF3b155, SF3B2/SF3b145, SF3B3/SF3b130 and CDC5L. May interact with LUC7L2 and SNRNP70.

It is found in the nucleus. It localises to the nucleoplasm. The protein localises to the nucleus speckle. Functionally, as a component of the minor spliceosome, involved in the splicing of U12-type introns in pre-mRNAs. Plays a role in the regulation of primary cilia length and Hedgehog signaling. The sequence is that of Sodium channel modifier 1 (SCNM1) from Homo sapiens (Human).